The sequence spans 386 residues: GTPase Obg (386 aa).

The region spanning 4–162 (SNFVDYVKIY…MTVILELKLL (159 aa)) is the Obg domain. Residues 18 to 45 (KGGRGSTHMRREKYTPNGGPDGGDGGRG) form a disordered region. The segment covering 36 to 45 (GPDGGDGGRG) has biased composition (gly residues). The OBG-type G domain occupies 163–329 (ADVGLVGFPN…LKDILWTELN (167 aa)). Residues 169-176 (GFPNAGKS), 194-198 (FTTLE), 216-219 (DIPG), 283-286 (TKSD), and 310-312 (SSV) contribute to the GTP site. Serine 176 and threonine 196 together coordinate Mg(2+). The disordered stretch occupies residues 351–386 (ELKDMGEDEELDYEYEDDGDEDDLDYEYEEEDWEDK). Residues 356–386 (GEDEELDYEYEDDGDEDDLDYEYEEEDWEDK) show a composition bias toward acidic residues.

Belongs to the TRAFAC class OBG-HflX-like GTPase superfamily. OBG GTPase family. Monomer. It depends on Mg(2+) as a cofactor.

It localises to the cytoplasm. An essential GTPase which binds GTP, GDP and possibly (p)ppGpp with moderate affinity, with high nucleotide exchange rates and a fairly low GTP hydrolysis rate. Plays a role in control of the cell cycle, stress response, ribosome biogenesis and in those bacteria that undergo differentiation, in morphogenesis control. The sequence is that of GTPase Obg from Bacteroides fragilis (strain YCH46).